Reading from the N-terminus, the 192-residue chain is Thymidylate kinase (192 aa).

An ATP-binding site is contributed by 7–14 (GIDCVGKS).

This sequence belongs to the thymidylate kinase family.

The enzyme catalyses dTMP + ATP = dTDP + ADP. Phosphorylation of dTMP to form dTDP in both de novo and salvage pathways of dTTP synthesis. The sequence is that of Thymidylate kinase (tmk) from Campylobacter jejuni subsp. jejuni serotype O:2 (strain ATCC 700819 / NCTC 11168).